The following is a 204-amino-acid chain: Leucyl/phenylalanyl-tRNA--protein transferase (204 aa).

Belongs to the L/F-transferase family.

Its subcellular location is the cytoplasm. The enzyme catalyses N-terminal L-lysyl-[protein] + L-leucyl-tRNA(Leu) = N-terminal L-leucyl-L-lysyl-[protein] + tRNA(Leu) + H(+). It catalyses the reaction N-terminal L-arginyl-[protein] + L-leucyl-tRNA(Leu) = N-terminal L-leucyl-L-arginyl-[protein] + tRNA(Leu) + H(+). It carries out the reaction L-phenylalanyl-tRNA(Phe) + an N-terminal L-alpha-aminoacyl-[protein] = an N-terminal L-phenylalanyl-L-alpha-aminoacyl-[protein] + tRNA(Phe). Functionally, functions in the N-end rule pathway of protein degradation where it conjugates Leu, Phe and, less efficiently, Met from aminoacyl-tRNAs to the N-termini of proteins containing an N-terminal arginine or lysine. This Rhizobium meliloti (strain 1021) (Ensifer meliloti) protein is Leucyl/phenylalanyl-tRNA--protein transferase.